A 354-amino-acid polypeptide reads, in one-letter code: Probable trehalose-phosphate phosphatase E (354 aa).

Belongs to the trehalose phosphatase family. A divalent metal cation serves as cofactor.

The catalysed reaction is alpha,alpha-trehalose 6-phosphate + H2O = alpha,alpha-trehalose + phosphate. It functions in the pathway glycan biosynthesis; trehalose biosynthesis. In terms of biological role, removes the phosphate from trehalose 6-phosphate to produce free trehalose. Trehalose accumulation in plant may improve abiotic stress tolerance. In Arabidopsis thaliana (Mouse-ear cress), this protein is Probable trehalose-phosphate phosphatase E (TPPE).